We begin with the raw amino-acid sequence, 948 residues long: Coatomer subunit beta-2 (948 aa).

6 HEAT repeats span residues 49–87 (ETIP…TDSK), 92–126 (PEMI…MKET), 127–164 (EIVE…LPHG), 274–311 (TAIR…TLHR), 312–349 (DIMV…HHNI), and 391–428 (EVAS…TNPK).

In terms of assembly, oligomeric complex that consists of at least the alpha, beta, beta', gamma, delta, epsilon and zeta subunits.

The protein resides in the cytoplasm. The protein localises to the golgi apparatus membrane. It localises to the cytoplasmic vesicle. It is found in the COPI-coated vesicle membrane. Functionally, the coatomer is a cytosolic protein complex that binds to dilysine motifs and reversibly associates with Golgi non-clathrin-coated vesicles, which further mediate biosynthetic protein transport from the ER, via the Golgi up to the trans Golgi network. Coatomer complex is required for budding from Golgi membranes, and is essential for the retrograde Golgi-to-ER transport of dilysine-tagged proteins. The chain is Coatomer subunit beta-2 from Arabidopsis thaliana (Mouse-ear cress).